We begin with the raw amino-acid sequence, 1362 residues long: DNA-directed RNA polymerase subunit beta (1362 aa).

This sequence belongs to the RNA polymerase beta chain family. The RNAP catalytic core consists of 2 alpha, 1 beta, 1 beta' and 1 omega subunit. When a sigma factor is associated with the core the holoenzyme is formed, which can initiate transcription.

It carries out the reaction RNA(n) + a ribonucleoside 5'-triphosphate = RNA(n+1) + diphosphate. Its function is as follows. DNA-dependent RNA polymerase catalyzes the transcription of DNA into RNA using the four ribonucleoside triphosphates as substrates. The polypeptide is DNA-directed RNA polymerase subunit beta (Acidithiobacillus ferrooxidans (strain ATCC 23270 / DSM 14882 / CIP 104768 / NCIMB 8455) (Ferrobacillus ferrooxidans (strain ATCC 23270))).